The primary structure comprises 389 residues: DNA replication and repair protein RecF (389 aa).

30-37 (GPNGFGKT) is a binding site for ATP.

It belongs to the RecF family.

The protein localises to the cytoplasm. In terms of biological role, the RecF protein is involved in DNA metabolism; it is required for DNA replication and normal SOS inducibility. RecF binds preferentially to single-stranded, linear DNA. It also seems to bind ATP. This Mycolicibacterium gilvum (strain PYR-GCK) (Mycobacterium gilvum (strain PYR-GCK)) protein is DNA replication and repair protein RecF.